The following is a 135-amino-acid chain: Small ribosomal subunit protein uS11 (135 aa).

The segment at 1 to 26 (MPPKSRTAGGARKTRRKEKKNVSHGH) is disordered. The span at 12–23 (RKTRRKEKKNVS) shows a compositional bias: basic residues.

The protein belongs to the universal ribosomal protein uS11 family. As to quaternary structure, part of the 30S ribosomal subunit. Interacts with proteins S7 and S18. Binds to IF-3.

In terms of biological role, located on the platform of the 30S subunit, it bridges several disparate RNA helices of the 16S rRNA. Forms part of the Shine-Dalgarno cleft in the 70S ribosome. The sequence is that of Small ribosomal subunit protein uS11 from Beutenbergia cavernae (strain ATCC BAA-8 / DSM 12333 / CCUG 43141 / JCM 11478 / NBRC 16432 / NCIMB 13614 / HKI 0122).